We begin with the raw amino-acid sequence, 726 residues long: WD repeat and coiled-coil-containing protein (726 aa).

WD repeat units lie at residues 55-98 and 154-194; these read GQFE…LDKN and KSSG…LNAC. The tract at residues 503 to 571 is disordered; that stretch reads SYDGDQSPTS…SSPPNFIKHG (69 aa). Residues 506–515 show a composition bias toward polar residues; that stretch reads GDQSPTSSAN. Positions 517–535 are enriched in basic and acidic residues; it reads FDDKRSKLRVESLDTEPKN. The span at 550–565 shows a compositional bias: polar residues; that stretch reads SRPTSPKSECQKSSPP. Residues 581-609 adopt a coiled-coil conformation; it reads SISRNVERLCCNFAHLQQHLSELTDITRN.

This Xenopus tropicalis (Western clawed frog) protein is WD repeat and coiled-coil-containing protein (wdcp).